The sequence spans 899 residues: Valine--tRNA ligase (899 aa).

Residues 58-68 (PNVTGVLHIGH) carry the 'HIGH' region motif. The 'KMSKS' region motif lies at 544 to 548 (KMSKS). K547 serves as a coordination point for ATP. A coiled-coil region spans residues 836 to 898 (GTRLHNQRQK…NAELIALGLQ (63 aa)).

Belongs to the class-I aminoacyl-tRNA synthetase family. ValS type 1 subfamily. As to quaternary structure, monomer.

It is found in the cytoplasm. The catalysed reaction is tRNA(Val) + L-valine + ATP = L-valyl-tRNA(Val) + AMP + diphosphate. Catalyzes the attachment of valine to tRNA(Val). As ValRS can inadvertently accommodate and process structurally similar amino acids such as threonine, to avoid such errors, it has a 'posttransfer' editing activity that hydrolyzes mischarged Thr-tRNA(Val) in a tRNA-dependent manner. The polypeptide is Valine--tRNA ligase (Helicobacter hepaticus (strain ATCC 51449 / 3B1)).